Consider the following 908-residue polypeptide: Protein translocase subunit SecA (908 aa).

Residues Gln87, 105-109, and Asp512 each bind ATP; that span reads GEGKT. The segment at 865–908 is disordered; it reads GGDDGSDEMMAHTPMIRDGDKVGRNDPCPCGSGRKYKQCHGKLS. The segment covering 879-888 has biased composition (basic and acidic residues); sequence MIRDGDKVGR. Residues Cys892, Cys894, Cys903, and His904 each coordinate Zn(2+). Residues 898–908 show a composition bias toward basic residues; sequence RKYKQCHGKLS.

Belongs to the SecA family. Monomer and homodimer. Part of the essential Sec protein translocation apparatus which comprises SecA, SecYEG and auxiliary proteins SecDF-YajC and YidC. The cofactor is Zn(2+).

It is found in the cell inner membrane. The protein localises to the cytoplasm. It carries out the reaction ATP + H2O + cellular proteinSide 1 = ADP + phosphate + cellular proteinSide 2.. Its function is as follows. Part of the Sec protein translocase complex. Interacts with the SecYEG preprotein conducting channel. Has a central role in coupling the hydrolysis of ATP to the transfer of proteins into and across the cell membrane, serving both as a receptor for the preprotein-SecB complex and as an ATP-driven molecular motor driving the stepwise translocation of polypeptide chains across the membrane. This Shewanella sp. (strain MR-7) protein is Protein translocase subunit SecA.